We begin with the raw amino-acid sequence, 176 residues long: NAD(P)H-quinone oxidoreductase subunit 6, chloroplastic (176 aa).

5 helical membrane-spanning segments follow: residues 10–30 (ILMLFGGFILLLGGLGVVLLT), 33–53 (IYSAFSLGLVLVCISLFYFLL), 60–80 (VAQLLIYVGAINVLIIFAVMF), 95–115 (IGDGFTSLVCITFVFSLMTTI), and 152–172 (FYLPFELISIILLVSLIGAIT).

It belongs to the complex I subunit 6 family. NDH is composed of at least 16 different subunits, 5 of which are encoded in the nucleus.

Its subcellular location is the plastid. The protein localises to the chloroplast thylakoid membrane. It catalyses the reaction a plastoquinone + NADH + (n+1) H(+)(in) = a plastoquinol + NAD(+) + n H(+)(out). The catalysed reaction is a plastoquinone + NADPH + (n+1) H(+)(in) = a plastoquinol + NADP(+) + n H(+)(out). In terms of biological role, NDH shuttles electrons from NAD(P)H:plastoquinone, via FMN and iron-sulfur (Fe-S) centers, to quinones in the photosynthetic chain and possibly in a chloroplast respiratory chain. The immediate electron acceptor for the enzyme in this species is believed to be plastoquinone. Couples the redox reaction to proton translocation, and thus conserves the redox energy in a proton gradient. The sequence is that of NAD(P)H-quinone oxidoreductase subunit 6, chloroplastic (ndhG) from Hordeum vulgare (Barley).